Consider the following 129-residue polypeptide: M-zodatoxin-Lt8b (129 aa).

The N-terminal stretch at 1-20 (MKYFVVALALVAAFACIAES) is a signal peptide. Positions 21–60 (KPAESEHELAEVEEENELADLEDAVWLEHLADLSDLEEAR) are excised as a propeptide. The Processing quadruplet motif signature appears at 57–60 (EEAR).

Post-translationally, cleavage of the propeptide depends on the processing quadruplet motif (XXXR, with at least one of X being E). As to expression, expressed by the venom gland.

It is found in the secreted. Functionally, insecticidal, cytolytic and antimicrobial peptide. Forms voltage-dependent, ion-permeable channels in membranes. At high concentration causes cell membrane lysis. The sequence is that of M-zodatoxin-Lt8b (cit 1-2) from Lachesana tarabaevi (Spider).